A 370-amino-acid chain; its full sequence is Alanine racemase (370 aa).

Catalysis depends on K39, which acts as the Proton acceptor; specific for D-alanine. K39 is subject to N6-(pyridoxal phosphate)lysine. R137 lines the substrate pocket. Y258 (proton acceptor; specific for L-alanine) is an active-site residue. Substrate is bound at residue M306.

Belongs to the alanine racemase family. Pyridoxal 5'-phosphate is required as a cofactor.

The catalysed reaction is L-alanine = D-alanine. It functions in the pathway amino-acid biosynthesis; D-alanine biosynthesis; D-alanine from L-alanine: step 1/1. Functionally, catalyzes the interconversion of L-alanine and D-alanine. May also act on other amino acids. The chain is Alanine racemase (alr) from Methylobacterium nodulans (strain LMG 21967 / CNCM I-2342 / ORS 2060).